Here is a 203-residue protein sequence, read N- to C-terminus: Pro-FMRFamide-related neuropeptide VF (203 aa).

The signal sequence occupies residues 1–26 (MEIISSKRFILLTLATSSFLTSNTLC). Positions 27–57 (SDELMMPHFHSKEGYGKYYQLRGIPKGVKER) are excised as a propeptide. Position 94 is a phenylalanine amide (Phe-94). The propeptide occupies 97–106 (NIEDRRSPRA). Residue Phe-125 is modified to Phenylalanine amide. Positions 128–203 (TTARRITKTL…QPVLQGAMKL (76 aa)) are excised as a propeptide. Residues 161–186 (HQEIQSPGQEQPRKRVFTETDDAERK) form a disordered region. The segment covering 171–186 (QPRKRVFTETDDAERK) has biased composition (basic and acidic residues).

It belongs to the FARP (FMRFamide related peptide) family. Isoform 1 is expressed at high levels in the hypothalamus and eye. Isoform 2 is specifically expressed in a region between the dorsomedial hypothalamic and ventromedial hypothalamic nuclei.

It localises to the secreted. Functionally, efficiently inhibits forskolin-induced production of cAMP. Acts as a potent negative regulator of gonadotropin synthesis and secretion. Induces secretion of prolactin. Efficiently inhibits forskolin-induced production of cAMP. Blocks morphine-induced analgesia. This chain is Pro-FMRFamide-related neuropeptide VF (Npvf), found in Rattus norvegicus (Rat).